We begin with the raw amino-acid sequence, 512 residues long: MKKQHDTIIVLDFGSQYNQLIARRIREFGVYSELHPHTITAEEIKAMNPKGIIFSGGPNSVYGEGALHCDEKIFELGLPIFGICYGMQLMTQHFGGKVERANHREYGKAVLKVENESKLYANLPEEQVVWMSHGDLVTGLPEGFVVDATSESCPIAGMSNEGENLYGVQFHPEVRHSEHGNDLIKNFVFGVCGCSEGWNMENFIEVELEKIRETVGDKKVLCALSGGVDSSVVAVLIHKAIGDQLTCIFVDHGLLRKDEAEGVMKTFSEGFHMNVIKVDAQERFMNKLKGVEDPEQKRKIIGNEFIYVFDDEASKLQGMDFLAQGTLYTDIVESGTATAQTIKSHHNVGGLPEDMQFKLIEPLNTLFKDEVRVLGSELGIPDEIVWRQPFPGPGLGIRVLGEITEEKLEIVRESDAILREEIIKAGLDREVWQYFTALPGMRSVGVMGDERTYDYTVGIRAVTSIDGMTADWARIPWDVLEKISVRIVNEVKHVNRIVYDITSKPPATIEWE.

In terms of domain architecture, Glutamine amidotransferase type-1 spans 7-197; sequence TIIVLDFGSQ…VFGVCGCSEG (191 aa). The Nucleophile role is filled by Cys84. Catalysis depends on residues His171 and Glu173. Positions 198–387 constitute a GMPS ATP-PPase domain; the sequence is WNMENFIEVE…LGIPDEIVWR (190 aa). 225-231 is an ATP binding site; sequence SGGVDSS.

Homodimer.

It catalyses the reaction XMP + L-glutamine + ATP + H2O = GMP + L-glutamate + AMP + diphosphate + 2 H(+). Its pathway is purine metabolism; GMP biosynthesis; GMP from XMP (L-Gln route): step 1/1. In terms of biological role, catalyzes the synthesis of GMP from XMP. The polypeptide is GMP synthase [glutamine-hydrolyzing] (Bacillus mycoides (strain KBAB4) (Bacillus weihenstephanensis)).